Consider the following 210-residue polypeptide: Cytidylate kinase (210 aa).

7–15 serves as a coordination point for ATP; that stretch reads GPAASGKGT.

Belongs to the cytidylate kinase family. Type 1 subfamily.

The protein localises to the cytoplasm. The catalysed reaction is CMP + ATP = CDP + ADP. The enzyme catalyses dCMP + ATP = dCDP + ADP. The protein is Cytidylate kinase of Methylobacterium sp. (strain 4-46).